Consider the following 501-residue polypeptide: Archaemetzincin-1 (501 aa).

H261 is a binding site for Zn(2+). The Proton acceptor role is filled by E262. H265, C272, C277, C296, and C299 together coordinate Zn(2+). Positions 349–370 (DSGMGCESDTEPVTSPSEPVTP) are disordered.

It belongs to the peptidase M54 family. The cofactor is Zn(2+).

In terms of biological role, probable zinc metalloprotease. This is Archaemetzincin-1 (Amz1) from Rattus norvegicus (Rat).